The sequence spans 303 residues: ASC1-like protein (303 aa).

Helical transmembrane passes span 19 to 39, 81 to 101, 127 to 147, 153 to 173, 212 to 232, and 255 to 275; these read YEDF…RFLL, CIYF…EPWF, ALYM…IFWE, FGVS…SYNI, YLCL…VLWS, and YIFN…WVLI. The TLC domain maps to 72–284; the sequence is RKFKESAWKC…IYRMLVKQIQ (213 aa).

The protein resides in the endoplasmic reticulum membrane. Functionally, mediates resistance to sphinganine-analog mycotoxins (SAMs) by restoring the sphingolipid biosynthesis. Could salvage the transport of GPI-anchored proteins from the endoplasmic reticulum to the Golgi apparatus in ceramides-depleted cells after SAM exposure. This chain is ASC1-like protein, found in Solanum lycopersicum (Tomato).